We begin with the raw amino-acid sequence, 289 residues long: UPF0276 protein BP2925 (289 aa).

It belongs to the UPF0276 family.

This is UPF0276 protein BP2925 from Bordetella pertussis (strain Tohama I / ATCC BAA-589 / NCTC 13251).